The following is a 317-amino-acid chain: Protein translocase subunit SecF (317 aa).

A run of 6 helical transmembrane segments spans residues 11-31 (FYLLSLLIIIPGTIYLLLFGL), 135-155 (RSIVAIALASLGILGYIAFAF), 166-186 (ICAIIAMLHDVLVVVGIFAIL), 197-217 (LFVTALLTVIGFSVHDTIVVF), 244-266 (LVRSVNTSMTVIFTLLALYFFGG), and 276-298 (LLIGIVSGTYSSIFNASLLLVSW).

This sequence belongs to the SecD/SecF family. SecF subfamily. In terms of assembly, forms a complex with SecD. Part of the essential Sec protein translocation apparatus which comprises SecA, SecYEG and auxiliary proteins SecDF. Other proteins may also be involved.

Its subcellular location is the cell membrane. In terms of biological role, part of the Sec protein translocase complex. Interacts with the SecYEG preprotein conducting channel. SecDF uses the proton motive force (PMF) to complete protein translocation after the ATP-dependent function of SecA. This chain is Protein translocase subunit SecF, found in Thermobaculum terrenum (strain ATCC BAA-798 / CCMEE 7001 / YNP1).